The chain runs to 159 residues: Phosphopantetheine adenylyltransferase (159 aa).

S10 serves as a coordination point for substrate. Residues 10 to 11 (SF) and H18 contribute to the ATP site. Substrate is bound by residues K42, L77, and K91. Residues 92–94 (GIR), E102, and 126–132 (NAHVSSS) contribute to the ATP site.

It belongs to the bacterial CoaD family. Homohexamer. The cofactor is Mg(2+).

It localises to the cytoplasm. It carries out the reaction (R)-4'-phosphopantetheine + ATP + H(+) = 3'-dephospho-CoA + diphosphate. It functions in the pathway cofactor biosynthesis; coenzyme A biosynthesis; CoA from (R)-pantothenate: step 4/5. In terms of biological role, reversibly transfers an adenylyl group from ATP to 4'-phosphopantetheine, yielding dephospho-CoA (dPCoA) and pyrophosphate. This Leifsonia xyli subsp. xyli (strain CTCB07) protein is Phosphopantetheine adenylyltransferase.